Here is a 217-residue protein sequence, read N- to C-terminus: Large ribosomal subunit protein uL1 (217 aa).

Serine 2 carries the N-acetylserine modification. Phosphotyrosine is present on tyrosine 11. N6-acetyllysine is present on residues lysine 91 and lysine 106. An N6-acetyllysine; alternate modification is found at lysine 118. Lysine 118 participates in a covalent cross-link: Glycyl lysine isopeptide (Lys-Gly) (interchain with G-Cter in SUMO1); alternate. A Glycyl lysine isopeptide (Lys-Gly) (interchain with G-Cter in SUMO2); alternate cross-link involves residue lysine 118. Lysine 161 is covalently cross-linked (Glycyl lysine isopeptide (Lys-Gly) (interchain with G-Cter in SUMO2)).

It belongs to the universal ribosomal protein uL1 family. In terms of assembly, component of the large ribosomal subunit.

It is found in the cytoplasm. Functionally, component of the large ribosomal subunit. The ribosome is a large ribonucleoprotein complex responsible for the synthesis of proteins in the cell. This Mus musculus (Mouse) protein is Large ribosomal subunit protein uL1 (Rpl10a).